The following is a 63-amino-acid chain: Large ribosomal subunit protein bL28 (63 aa).

The protein belongs to the bacterial ribosomal protein bL28 family.

The sequence is that of Large ribosomal subunit protein bL28 from Acidobacterium capsulatum (strain ATCC 51196 / DSM 11244 / BCRC 80197 / JCM 7670 / NBRC 15755 / NCIMB 13165 / 161).